The following is a 189-amino-acid chain: MNLSATLVLAFAMSMDAFAASIGKGASLHKPRFREAIRTGLIFGVIEAITPLIGWCIGLFASQYILEWDHWIAFSLLFILGCRMIFEGAKQQVEETEKMRSHSFWVLVMTAIATSLDAMAIGVGLAFLQVNIVHTAMAIGLATMIMATLGMLIGRYIGPLLGKRAEIIGGIVLIGIGFNILYEHIYRLA.

Transmembrane regions (helical) follow at residues 3–23 (LSAT…ASIG), 41–61 (LIFG…GLFA), 65–85 (ILEW…CRMI), 104–124 (FWVL…IGVG), 132–152 (IVHT…LGML), and 165–185 (AEII…YEHI).

This sequence belongs to the MntP (TC 9.B.29) family.

Its subcellular location is the cell inner membrane. In terms of biological role, probably functions as a manganese efflux pump. The protein is Putative manganese efflux pump MntP of Yersinia enterocolitica serotype O:8 / biotype 1B (strain NCTC 13174 / 8081).